The primary structure comprises 268 residues: Ethylene-responsive transcription factor ERN1 (268 aa).

The span at 1 to 21 (MEIQFQQPNMQNQKAGISVTN) shows a compositional bias: polar residues. Residues 1 to 36 (MEIQFQQPNMQNQKAGISVTNKGGKFKGRNRNSNNT) form a disordered region. A DNA-binding region (AP2/ERF) is located at residues 38–95 (KFVGVRQRPSGRWVAEIKDTTQKIRMWLGTFETAEEAARAYDEAACLLRGSNTRTNFI). A disordered region spans residues 114–154 (NRKGDKKQEDGAVASAPSNSKTTISNTSTITSNDDNKESTL). Low complexity predominate over residues 131 to 146 (SNSKTTISNTSTITSN).

It belongs to the AP2/ERF transcription factor family. ERF subfamily. As to expression, expressed in roots, root hairs and leaves. Expressed in root epidermis and root hairs.

It is found in the nucleus. Its function is as follows. Transcription factor involved in symbiotic nodule signaling in response to rhizobial Nod factors (NFs). Binds to the GCC-box (NF-responsive box) of ENOD11 promoter. Acts as a transcriptional activator of NF-responsive box-containing target gene promoters in root hairs. Functions as a transcriptional regulator required for root infection by symbiotic rhizobia, infection thread (IT) formation and maintenance, and nodule development. Necessary for NF-induced gene expression and spontaneous nodulation activated by CCAMK. Functions downstream of CCAMK to activate nodulation gene expression. Involved in early stages of root nodule development. Functions redundantly with ERN2. Is essential with ERN2 for the initiation of root hair infection, and nodule organogenesis and development. Required for accurate expression of the NF signaling genes ENOD11 and ENOD12. This Medicago truncatula (Barrel medic) protein is Ethylene-responsive transcription factor ERN1.